The primary structure comprises 86 residues: Large ribosomal subunit protein bL27 (86 aa).

Residues 1-10 (MAQKKGGGST) show a composition bias toward gly residues. The interval 1–22 (MAQKKGGGSTRNGRDSESKRLG) is disordered.

The protein belongs to the bacterial ribosomal protein bL27 family.

In Polynucleobacter asymbioticus (strain DSM 18221 / CIP 109841 / QLW-P1DMWA-1) (Polynucleobacter necessarius subsp. asymbioticus), this protein is Large ribosomal subunit protein bL27.